A 186-amino-acid polypeptide reads, in one-letter code: Ras-related protein rapA (186 aa).

12-19 contacts GTP; that stretch reads GSGGVGKS. Residues 34–42 carry the Effector region motif; the sequence is YDPTIEDSY. GTP contacts are provided by residues 59–63 and 118–121; these read DTAGT and NKCD. Cys-183 is modified (cysteine methyl ester). A lipid anchor (S-geranylgeranyl cysteine) is attached at Cys-183. Residues 184–186 constitute a propeptide, removed in mature form; it reads ALL.

The protein belongs to the small GTPase superfamily. Ras family. Interacts with ralGDS (only when rapA is in its GTP-bound state). Interacts with the Rap guanine nucleotide exchange factor glfB.

It localises to the cell membrane. The enzyme catalyses GTP + H2O = GDP + phosphate + H(+). Functionally, g protein of the Ras family that positively regulates phagocytosis and negatively regulates macropinocytosis. May be involved in the activation of guanylyl cyclase during the response to hyperosmotic conditions. Overexpressing cells generate alterations in cell shape and contractile responses. Involved in chemotaxis via regulation of the balance of Ras and Rap signaling at the leading edge of chemotaxing cells. The chain is Ras-related protein rapA (rapA) from Dictyostelium discoideum (Social amoeba).